A 293-amino-acid chain; its full sequence is Protease HtpX (293 aa).

2 helical membrane passes run 4-24 (IALFLLTNLAVMVVFGLVLSL) and 34-54 (GLLIMALLFGFGGSFISLLMS). Zn(2+) is bound at residue His-139. Glu-140 is a catalytic residue. His-143 provides a ligand contact to Zn(2+). 2 consecutive transmembrane segments (helical) span residues 158-178 (VVNTFVIFISRIIAQIAAGFL) and 193-213 (LIYFAVATVLELVFGILASII). A Zn(2+)-binding site is contributed by Glu-222.

The protein belongs to the peptidase M48B family. Zn(2+) is required as a cofactor.

The protein resides in the cell inner membrane. The chain is Protease HtpX from Salmonella agona (strain SL483).